A 265-amino-acid polypeptide reads, in one-letter code: Cyclin-B2-5 (265 aa).

This sequence belongs to the cyclin family. Cyclin AB subfamily.

The chain is Cyclin-B2-5 (CYCB2-5) from Arabidopsis thaliana (Mouse-ear cress).